The chain runs to 314 residues: Oxidoreductase NAD-binding domain-containing protein 1 (314 aa).

The first 18 residues, methionine 1 to glycine 18, serve as a signal peptide directing secretion. Residues glutamate 63–glutamine 166 enclose the FAD-binding FR-type domain. NAD(+) is bound at residue glycine 180–proline 185.

This chain is Oxidoreductase NAD-binding domain-containing protein 1 (oxnad1), found in Xenopus laevis (African clawed frog).